Here is a 204-residue protein sequence, read N- to C-terminus: AFG2-interacting ribosome maturation factor (204 aa).

Part of the 55LCC heterohexameric ATPase complex. Does not associate with pre-60S ribosomal particles.

It localises to the nucleus. The protein localises to the cytoplasm. Part of the 55LCC heterohexameric ATPase complex which is chromatin-associated and promotes replisome proteostasis to maintain replication fork progression and genome stability. Required for replication fork progression, sister chromatid cohesion, and chromosome stability. The ATPase activity is specifically enhanced by replication fork DNA and is coupled to cysteine protease-dependent cleavage of replisome substrates in response to replication fork damage. Uses ATPase activity to process replisome substrates in S-phase, facilitating their proteolytic turnover from chromatin to ensure DNA replication and mitotic fidelity. Involved in the cytoplasmic maturation steps of pre-60S ribosomal particles by promoting the release of shuttling protein RSL24D1/RLP24 from the pre-ribosomal particles. The polypeptide is AFG2-interacting ribosome maturation factor (airim) (Xenopus tropicalis (Western clawed frog)).